We begin with the raw amino-acid sequence, 503 residues long: Maturase K (503 aa).

Belongs to the intron maturase 2 family. MatK subfamily.

It localises to the plastid. The protein resides in the chloroplast. Its function is as follows. Usually encoded in the trnK tRNA gene intron. Probably assists in splicing its own and other chloroplast group II introns. The polypeptide is Maturase K (Diospyros kaki (Kaki persimmon)).